The sequence spans 538 residues: Cytosolic Fe-S cluster assembly factor NAR1 homolog (538 aa).

Residues C19, C64, C67, C70, C218, C273, C453, and C457 each contribute to the [4Fe-4S] cluster site.

Belongs to the NARF family.

Its subcellular location is the cytoplasm. The protein localises to the nucleus. Its function is as follows. Component of the cytosolic Fe/S protein assembly machinery. Required for maturation of extramitochondrial Fe/S proteins. May play a role in the transfer of pre-assembled Fe/S clusters to target apoproteins. The sequence is that of Cytosolic Fe-S cluster assembly factor NAR1 homolog from Schizosaccharomyces pombe (strain 972 / ATCC 24843) (Fission yeast).